The primary structure comprises 241 residues: Ribosome assembly factor mrt4 (241 aa).

This sequence belongs to the universal ribosomal protein uL10 family. Associates with the pre-60S ribosomal particle.

It localises to the nucleus. The protein localises to the nucleolus. Its subcellular location is the cytoplasm. Its function is as follows. Component of the ribosome assembly machinery. Nuclear paralog of the ribosomal protein P0, it binds pre-60S subunits at an early stage of assembly in the nucleolus, and is replaced by P0 in cytoplasmic pre-60S subunits and mature 80S ribosomes. This chain is Ribosome assembly factor mrt4, found in Schizosaccharomyces pombe (strain 972 / ATCC 24843) (Fission yeast).